The chain runs to 500 residues: NAD(P)H-quinone oxidoreductase chain 4, chloroplastic (500 aa).

The next 14 membrane-spanning stretches (helical) occupy residues 4-24, 31-51, 84-104, 111-129, 134-154, 167-187, 208-228, 242-262, 272-292, 305-325, 330-350, 386-406, 416-436, and 463-483; these read FPWL…IFLF, VIKW…TYAF, GFSL…TLAA, SRLF…IGLF, LLLF…LLSM, FILY…GIAL, ALEI…SPII, HYST…YGLV, AHSI…IYAA, IAYS…SISD, GAIL…FLAG, LALP…GIIT, ILIT…LLSM, and FVSI…DFVF.

Belongs to the complex I subunit 4 family.

The protein resides in the plastid. It is found in the chloroplast thylakoid membrane. It carries out the reaction a plastoquinone + NADH + (n+1) H(+)(in) = a plastoquinol + NAD(+) + n H(+)(out). It catalyses the reaction a plastoquinone + NADPH + (n+1) H(+)(in) = a plastoquinol + NADP(+) + n H(+)(out). The chain is NAD(P)H-quinone oxidoreductase chain 4, chloroplastic from Manihot esculenta (Cassava).